Reading from the N-terminus, the 363-residue chain is Peroxisomal (S)-2-hydroxyacid oxidase GLO3 (363 aa).

In terms of domain architecture, FMN hydroxy acid dehydrogenase spans 1 to 357 (MDQIVNVDEF…TRNHVRTENE (357 aa)). FMN is bound by residues 78–80 (PTG), S107, 128–130 (QIY), and T156. Y130 provides a ligand contact to a 2-oxocarboxylate. Residue R165 coordinates a 2-oxocarboxylate. K228 and S250 together coordinate FMN. H252 serves as the catalytic Proton acceptor. R255 is a binding site for a 2-oxocarboxylate. Residues 283-287 (DGGVR) and 306-307 (GR) contribute to the FMN site. Positions 361-363 (SML) match the Microbody targeting signal motif.

The protein belongs to the FMN-dependent alpha-hydroxy acid dehydrogenase family. Homotetramer. The cofactor is FMN.

It is found in the peroxisome. It carries out the reaction a (2S)-2-hydroxycarboxylate + O2 = a 2-oxocarboxylate + H2O2. The enzyme catalyses 2-hydroxy-4-methylpentanoate + O2 = 4-methyl-2-oxopentanoate + H2O2. The catalysed reaction is 2-hydroxyhexanoate + O2 = 2-oxohexanoate + H2O2. It catalyses the reaction 2-hydroxyoctanoate + O2 = 2-oxooctanoate + H2O2. Its function is as follows. Oxidase that catalyzes the oxidation of a broad range of 2-hydroxyacids to the corresponding 2-oxoacids, with a reduction of O2 to H2O2. Displays the highest activity with leucic acid (2-hydroxy-4-methylpentanoate) and has intermediate activity with 2-hydroxyhexanoate and 2-hydroxyoctanote. Shows lower activity with 2-hydroxydodecanoate, valic acid, and isoleucic acid and extremely low activity with glycolate and L-lactate. Cannot use 2-hydroxyhexadecanoate or D-lactate as substrates. May be involved in the conversion or degradation of 2-hydroxyacids produced during the metabolism of fatty acids or amino acids. The protein is Peroxisomal (S)-2-hydroxyacid oxidase GLO3 (GLO3) of Arabidopsis thaliana (Mouse-ear cress).